Consider the following 574-residue polypeptide: 4-oxocyclohexanecarboxylate 2-dehydrogenase (574 aa).

Belongs to the FAD-dependent oxidoreductase 2 family. In terms of assembly, monomer. Homodimer. It depends on FAD as a cofactor.

It carries out the reaction 4-oxocyclohexane-1-carboxylate + O2 = 4-oxocyclohex-2-ene-1-carboxylate + H2O2. Its activity is regulated as follows. Inhibited by 5,5'-dithio-bis(2- nitrobenzoate) and N-bromosuccinimide, but not by thiol and chelating reagents. Desaturase involved in a cyclohexanecarboxylate (CHCA) degradation pathway. Catalyzes the conversion of 4-oxocyclohexanecarboxylate (4-oxoCHCA) to 4-oxocyclohexenecarboxylate. Is highly specific for 4-oxocyclohexanecarboxylic acid and shows only slight activity with 4-oxo-2-methylcyclohex-2-enecarboxylic acid. This is 4-oxocyclohexanecarboxylate 2-dehydrogenase from Sinomonas cyclohexanicum (Corynebacterium cyclohexanicum).